The primary structure comprises 79 residues: MSEISVTQTLDTLGLRCPEPVMLVRKNIRHLNDGEILLIIADDPATTRDIPSFCQFMDHTLLQSEVEKPPFKYWVKRGK.

The active-site Cysteine persulfide intermediate is Cys17.

It belongs to the sulfur carrier protein TusA family.

The protein localises to the cytoplasm. Sulfur carrier protein which probably makes part of a sulfur-relay system. This Haemophilus influenzae (strain PittEE) protein is Sulfur carrier protein TusA.